The chain runs to 77 residues: Putative antitoxin VapB3 (77 aa).

Residues 10–60 (RRGLKKELEELGINYAEAVRKFLEELVARERRRRALERARALREELRKKGA) are a coiled coil.

Forms a complex with putative toxin VapC3, possibly VapB(2)-VapC(2).

Antitoxin component of a type II toxin-antitoxin (TA) system. The chain is Putative antitoxin VapB3 (vAPb3) from Pyrobaculum aerophilum (strain ATCC 51768 / DSM 7523 / JCM 9630 / CIP 104966 / NBRC 100827 / IM2).